The following is a 95-amino-acid chain: uncharacterized protein (95 aa).

Transmembrane regions (helical) follow at residues 3-23, 35-55, and 63-83; these read YTVLIPLFIFIGAMVLFGFSF, ILFLAYCVDFLALIIAVMMLT, and MLGVLIPVLILSIIMFFVMII.

It is found in the cell membrane. This is an uncharacterized protein from Mycoplasma pneumoniae (strain ATCC 29342 / M129 / Subtype 1) (Mycoplasmoides pneumoniae).